Here is a 198-residue protein sequence, read N- to C-terminus: Na(+)-translocating NADH-quinone reductase subunit E (198 aa).

Helical transmembrane passes span 11–31 (SIFIENMALSFFLGMCTFLAV), 35–55 (VSTAFGLGIAVIVVLGIAVPA), 77–97 (FLNFITFIGVIAALVQILEMI), 110–130 (GIFLPLITVNCAIFGAVSFMV), 140–160 (VVYGIGAGTGWMLAIVALAGI), and 176–196 (LGITFISAGLMALGFMSFSGI).

Belongs to the NqrDE/RnfAE family. In terms of assembly, composed of six subunits; NqrA, NqrB, NqrC, NqrD, NqrE and NqrF.

It is found in the cell inner membrane. It carries out the reaction a ubiquinone + n Na(+)(in) + NADH + H(+) = a ubiquinol + n Na(+)(out) + NAD(+). In terms of biological role, NQR complex catalyzes the reduction of ubiquinone-1 to ubiquinol by two successive reactions, coupled with the transport of Na(+) ions from the cytoplasm to the periplasm. NqrA to NqrE are probably involved in the second step, the conversion of ubisemiquinone to ubiquinol. This chain is Na(+)-translocating NADH-quinone reductase subunit E, found in Glaesserella parasuis serovar 5 (strain SH0165) (Haemophilus parasuis).